The primary structure comprises 337 residues: Inositol 2-dehydrogenase (337 aa).

This sequence belongs to the Gfo/Idh/MocA family. Homotetramer.

The enzyme catalyses myo-inositol + NAD(+) = scyllo-inosose + NADH + H(+). Functionally, involved in the oxidation of myo-inositol (MI) to 2-keto-myo-inositol (2KMI or 2-inosose). The sequence is that of Inositol 2-dehydrogenase from Serratia proteamaculans (strain 568).